The sequence spans 933 residues: Probable Rho-type GTPase-activating protein 4 (933 aa).

2 LIM zinc-binding domains span residues 22-80 (CFCI…LCVD) and 81-129 (ICNG…CLPC). Disordered stretches follow at residues 181–200 (PSSV…NSLR) and 304–338 (ENGT…STTT). Positions 325 to 338 (RSSTMNYKSVSTTT) are enriched in polar residues. Ser353 is subject to Phosphoserine. 3 disordered regions span residues 415–435 (RLSS…NYEA), 605–628 (SSSF…SPRE), and 641–660 (GFRP…KRNS). Residues 619–628 (RTISTPSPRE) are compositionally biased toward polar residues. At Ser625 the chain carries Phosphoserine. The span at 643–652 (RPKDNKDKES) shows a compositional bias: basic and acidic residues. A phosphoserine mark is found at Ser738 and Ser740. One can recognise a Rho-GAP domain in the interval 753 to 932 (NRLTLLRVPT…FLIDHVHEVF (180 aa)).

GTPase-activating protein for Rho-type proteins. The chain is Probable Rho-type GTPase-activating protein 4 (rga4) from Schizosaccharomyces pombe (strain 972 / ATCC 24843) (Fission yeast).